The following is a 175-amino-acid chain: Shikimate kinase (175 aa).

14-19 lines the ATP pocket; sequence GAGKST. Ser-18 provides a ligand contact to Mg(2+). Substrate contacts are provided by Asp-36, Arg-60, and Gly-82. Arg-120 is a binding site for ATP. Arg-140 lines the substrate pocket. Position 157 (Gln-157) interacts with ATP.

It belongs to the shikimate kinase family. As to quaternary structure, monomer. The cofactor is Mg(2+).

It is found in the cytoplasm. The catalysed reaction is shikimate + ATP = 3-phosphoshikimate + ADP + H(+). It functions in the pathway metabolic intermediate biosynthesis; chorismate biosynthesis; chorismate from D-erythrose 4-phosphate and phosphoenolpyruvate: step 5/7. Functionally, catalyzes the specific phosphorylation of the 3-hydroxyl group of shikimic acid using ATP as a cosubstrate. The sequence is that of Shikimate kinase from Pasteurella multocida (strain Pm70).